The sequence spans 172 residues: Ribosome maturation factor RimM (172 aa).

Positions 96–168 constitute a PRC barrel domain; that stretch reads EGEFYYHEII…RVDVEIPEGL (73 aa).

It belongs to the RimM family. Binds ribosomal protein uS19.

It localises to the cytoplasm. An accessory protein needed during the final step in the assembly of 30S ribosomal subunit, possibly for assembly of the head region. Essential for efficient processing of 16S rRNA. May be needed both before and after RbfA during the maturation of 16S rRNA. It has affinity for free ribosomal 30S subunits but not for 70S ribosomes. The polypeptide is Ribosome maturation factor RimM (Streptococcus gordonii (strain Challis / ATCC 35105 / BCRC 15272 / CH1 / DL1 / V288)).